Here is a 222-residue protein sequence, read N- to C-terminus: UPF0758 protein Mpe_A2695 (222 aa).

The region spanning 100–222 (VFDSPQAVKD…VVSFAERGLL (123 aa)) is the MPN domain. 3 residues coordinate Zn(2+): H171, H173, and D184. A JAMM motif motif is present at residues 171-184 (HNHPSGVAEPSRAD).

Belongs to the UPF0758 family.

The sequence is that of UPF0758 protein Mpe_A2695 from Methylibium petroleiphilum (strain ATCC BAA-1232 / LMG 22953 / PM1).